Consider the following 471-residue polypeptide: Ribulose bisphosphate carboxylase large chain (471 aa).

Lysine 5 is modified (N6,N6,N6-trimethyllysine). 2 residues coordinate substrate: asparagine 114 and threonine 164. The Proton acceptor role is filled by lysine 166. Position 168 (lysine 168) interacts with substrate. Residues lysine 192, aspartate 194, and glutamate 195 each contribute to the Mg(2+) site. Residue lysine 192 is modified to N6-carboxylysine. The Proton acceptor role is filled by histidine 285. The substrate site is built by arginine 286, histidine 318, and serine 370.

Belongs to the RuBisCO large chain family. Type I subfamily. Heterohexadecamer of 8 large chains and 8 small chains; disulfide-linked. The disulfide link is formed within the large subunit homodimers. It depends on Mg(2+) as a cofactor. The disulfide bond which can form in the large chain dimeric partners within the hexadecamer appears to be associated with oxidative stress and protein turnover.

Its subcellular location is the plastid. The protein localises to the chloroplast. It catalyses the reaction 2 (2R)-3-phosphoglycerate + 2 H(+) = D-ribulose 1,5-bisphosphate + CO2 + H2O. The catalysed reaction is D-ribulose 1,5-bisphosphate + O2 = 2-phosphoglycolate + (2R)-3-phosphoglycerate + 2 H(+). Its function is as follows. RuBisCO catalyzes two reactions: the carboxylation of D-ribulose 1,5-bisphosphate, the primary event in carbon dioxide fixation, as well as the oxidative fragmentation of the pentose substrate in the photorespiration process. Both reactions occur simultaneously and in competition at the same active site. The chain is Ribulose bisphosphate carboxylase large chain from Schlumbergera truncata (Thanksgiving cactus).